The primary structure comprises 569 residues: MGVVRVQHETKMENQSWLKKLARRLGPGHVVNLCFIVVLLFSTLLTWREVVVLEDAYISSQRNHLENVANALDKHLQYNVDKLIFLRNGMREALVAPLDFTSLRNAVTEFEQHRDEHAWQIELNRRRTLPVNGVSDALVSEGNFLSRENESLDNEITAALEVGYLLRLAHNSSSMVEQAMYVSRAGFYVSTQPTLFTRNVPTRYYGYVTQPWFIGHSQRENRHRAVRWFTSQPEHASNTEPQVTVSVPVDSNNYWYGVLGMSIPVRTMQQFLRNAIDKNLDGEYQLYDSKLRFLTSSNPDHPTGNIFDPRELALLAQAMEHDTRGGIRMDSRYVSWERLDHFDGVLARVHTLSEGVRGDFGSISIALTLLWALFTTMLLLSWYVIRRMVSNMYVLQSSLQWQAWHDTLTRLYNRGALFEKARPLAKLCQTHQHPFSVIQVDLDHFKAINDRFGHQAGDRVLSHAAGLISSSLRAQDVAGRVGGEEFCVILPGANLTQAAEVAERIRLKLNEKEMLIAKSTTIRISASLGVSSSEETGDYDFEQLQSLADRRLYLAKQAGRNRVFASDNA.

The next 2 helical transmembrane spans lie at 25 to 45 (LGPGHVVNLCFIVVLLFSTLL) and 365 to 385 (IALTLLWALFTTMLLLSWYVI). Residues 433 to 568 (HPFSVIQVDL…GRNRVFASDN (136 aa)) enclose the GGDEF domain. D441 is a Mg(2+) binding site. Positions 449, 454, and 458 each coordinate substrate. E484 lines the Mg(2+) pocket. E484 (proton acceptor) is an active-site residue.

Homodimer. Requires Mg(2+) as cofactor.

It localises to the cell inner membrane. It carries out the reaction 2 GTP = 3',3'-c-di-GMP + 2 diphosphate. The protein operates within glycan metabolism; bacterial cellulose biosynthesis. Its pathway is purine metabolism; 3',5'-cyclic di-GMP biosynthesis. Functionally, catalyzes the synthesis of cyclic-di-GMP (c-di-GMP) via the condensation of 2 GTP molecules. Cyclic-di-GMP is a second messenger which controls cell surface-associated traits in bacteria. Involved in the regulation of cellulose production. This chain is Putative diguanylate cyclase DgcQ, found in Shigella flexneri.